The following is a 437-amino-acid chain: RNA-binding motif, single-stranded-interacting protein 3 (437 aa).

Residues 28 to 57 (YAPAPHPMAPPSPSTNSSSNNSSNNSSGEQ) are disordered. Pro residues predominate over residues 31–40 (APHPMAPPSP). Residues 41–54 (STNSSSNNSSNNSS) show a composition bias toward low complexity. 2 consecutive RRM domains span residues 61–134 (TNLY…MAKQ) and 140–225 (TNLY…FADG). Over residues 399-422 (TSPQTVAPSSQDTSGQQQQIAVDT) the composition is skewed to polar residues. The tract at residues 399 to 437 (TSPQTVAPSSQDTSGQQQQIAVDTSNEHAPAYSYQQSKP) is disordered.

As to expression, expressed in fetal brain, fetal lung, fetal liver, heart, brain, placenta, lung, liver, muscle, kidney and pancreas.

Its subcellular location is the cytoplasm. Functionally, binds poly(A) and poly(U) oligoribonucleotides. This is RNA-binding motif, single-stranded-interacting protein 3 (RBMS3) from Homo sapiens (Human).